A 157-amino-acid polypeptide reads, in one-letter code: Molybdopterin synthase catalytic subunit (157 aa).

Substrate contacts are provided by residues 103-104 (HR), Lys119, and 126-128 (KKE).

This sequence belongs to the MoaE family. MOCS2B subfamily. As to quaternary structure, heterotetramer; composed of 2 small (MOCS2A) and 2 large (MOCS2B) subunits.

The protein localises to the cytoplasm. The enzyme catalyses 2 [molybdopterin-synthase sulfur-carrier protein]-C-terminal-Gly-aminoethanethioate + cyclic pyranopterin phosphate + H2O = molybdopterin + 2 [molybdopterin-synthase sulfur-carrier protein]-C-terminal Gly-Gly + 2 H(+). The protein operates within cofactor biosynthesis; molybdopterin biosynthesis. Its function is as follows. Catalytic subunit of the molybdopterin synthase complex, a complex that catalyzes the conversion of precursor Z into molybdopterin. Acts by mediating the incorporation of 2 sulfur atoms from thiocarboxylated MOCS2A into precursor Z to generate a dithiolene group. The chain is Molybdopterin synthase catalytic subunit from Culex quinquefasciatus (Southern house mosquito).